Consider the following 247-residue polypeptide: ATP synthase subunit a, chloroplastic (247 aa).

5 helical membrane-spanning segments follow: residues 38-58 (QVLI…TLAV), 95-115 (VPFI…GALL), 134-154 (INTT…AGLT), 199-219 (LVVV…VMFL), and 220-240 (GLFT…AYIG).

Belongs to the ATPase A chain family. F-type ATPases have 2 components, CF(1) - the catalytic core - and CF(0) - the membrane proton channel. CF(1) has five subunits: alpha(3), beta(3), gamma(1), delta(1), epsilon(1). CF(0) has four main subunits: a, b, b' and c.

The protein localises to the plastid. It is found in the chloroplast thylakoid membrane. Key component of the proton channel; it plays a direct role in the translocation of protons across the membrane. The polypeptide is ATP synthase subunit a, chloroplastic (Jasminum nudiflorum (Winter jasmine)).